The chain runs to 127 residues: Protein LLP homolog (127 aa).

The segment covering 1-21 has biased composition (basic residues); the sequence is MAKSLRSKWKRKMRAEKRKKN. Residues 1–24 are disordered; that stretch reads MAKSLRSKWKRKMRAEKRKKNAPK. Glycyl lysine isopeptide (Lys-Gly) (interchain with G-Cter in SUMO2) cross-links involve residues lysine 65 and lysine 72. The span at 98–120 shows a compositional bias: basic residues; the sequence is RQRKRLKAKRERKKGKSKVKAMK. Residues 98–127 form a disordered region; the sequence is RQRKRLKAKRERKKGKSKVKAMKAAKGLTW.

It belongs to the learning-associated protein family. Interacts with CTCF, MYO1C and with the transcriptional machinery, including RNA polymerase II and TBP.

The protein resides in the nucleus. Its subcellular location is the nucleolus. The protein localises to the chromosome. Functionally, in hippocampal neurons, regulates dendritic and spine growth and synaptic transmission. This chain is Protein LLP homolog (LLPH), found in Bos taurus (Bovine).